A 175-amino-acid polypeptide reads, in one-letter code: Protein SELF-PRUNING (175 aa).

This sequence belongs to the phosphatidylethanolamine-binding protein family.

It localises to the cytoplasm. Its function is as follows. Not known. In plants homozygous for the recessive allele of the SP gene, sympodial segments develop progressively fewer nodes until the shoot is terminated by two consecutive. inflorescences. In Solanum lycopersicum (Tomato), this protein is Protein SELF-PRUNING (SP).